Here is a 284-residue protein sequence, read N- to C-terminus: 4-diphosphocytidyl-2-C-methyl-D-erythritol kinase (284 aa).

The active site involves K14. 97-107 provides a ligand contact to ATP; the sequence is PMGGGLGGGSS. D139 is an active-site residue.

Belongs to the GHMP kinase family. IspE subfamily.

The enzyme catalyses 4-CDP-2-C-methyl-D-erythritol + ATP = 4-CDP-2-C-methyl-D-erythritol 2-phosphate + ADP + H(+). It functions in the pathway isoprenoid biosynthesis; isopentenyl diphosphate biosynthesis via DXP pathway; isopentenyl diphosphate from 1-deoxy-D-xylulose 5-phosphate: step 3/6. In terms of biological role, catalyzes the phosphorylation of the position 2 hydroxy group of 4-diphosphocytidyl-2C-methyl-D-erythritol. This Psychromonas ingrahamii (strain DSM 17664 / CCUG 51855 / 37) protein is 4-diphosphocytidyl-2-C-methyl-D-erythritol kinase.